Consider the following 491-residue polypeptide: Glycogen synthase (491 aa).

R20 contacts ADP-alpha-D-glucose.

Belongs to the glycosyltransferase 1 family. Bacterial/plant glycogen synthase subfamily.

It catalyses the reaction [(1-&gt;4)-alpha-D-glucosyl](n) + ADP-alpha-D-glucose = [(1-&gt;4)-alpha-D-glucosyl](n+1) + ADP + H(+). It functions in the pathway glycan biosynthesis; glycogen biosynthesis. Functionally, synthesizes alpha-1,4-glucan chains using ADP-glucose. This chain is Glycogen synthase, found in Prosthecochloris aestuarii (strain DSM 271 / SK 413).